An 892-amino-acid chain; its full sequence is LEAF RUST 10 DISEASE-RESISTANCE LOCUS RECEPTOR-LIKE PROTEIN KINASE-like 2.8 (892 aa).

The first 27 residues, 1–27 (MYYHSLSSYSILFFLFSLFHHLPCASS), serve as a signal peptide directing secretion. Topologically, residues 28–496 (NQGLGWCESL…RFIATLVRYT (469 aa)) are extracellular. N-linked (GlcNAc...) asparagine glycosylation is found at asparagine 42, asparagine 71, asparagine 88, asparagine 112, asparagine 186, asparagine 222, asparagine 230, asparagine 286, asparagine 358, asparagine 384, asparagine 407, and asparagine 458. Residues 497 to 517 (FIALGALTGVVIVFLVLLCPC) traverse the membrane as a helical segment. Residues 518–892 (FRVQIFRKRK…TNSKLESSSL (375 aa)) are Cytoplasmic-facing. Threonine 547 carries the post-translational modification Phosphothreonine. Residues 556–854 (KSFTEVVGRG…ALEVPPRPVL (299 aa)) form the Protein kinase domain. Residues 562–570 (VGRGGFGIV) and lysine 584 each bind ATP. Tyrosine 629 is modified (phosphotyrosine). Aspartate 680 functions as the Proton acceptor in the catalytic mechanism. 2 positions are modified to phosphothreonine: threonine 717 and threonine 720.

Belongs to the protein kinase superfamily. Ser/Thr protein kinase family.

It localises to the membrane. It carries out the reaction L-seryl-[protein] + ATP = O-phospho-L-seryl-[protein] + ADP + H(+). The catalysed reaction is L-threonyl-[protein] + ATP = O-phospho-L-threonyl-[protein] + ADP + H(+). In Arabidopsis thaliana (Mouse-ear cress), this protein is LEAF RUST 10 DISEASE-RESISTANCE LOCUS RECEPTOR-LIKE PROTEIN KINASE-like 2.8.